A 71-amino-acid polypeptide reads, in one-letter code: UPF0337 protein RPA4418 (71 aa).

A disordered region spans residues 1 to 54 (MGSTMDKIKGQANELAGKAKQGIGEATGSDKLKGEGAIQEAKGHGQQALGNAKD).

Belongs to the UPF0337 (CsbD) family.

The protein is UPF0337 protein RPA4418 of Rhodopseudomonas palustris (strain ATCC BAA-98 / CGA009).